Reading from the N-terminus, the 203-residue chain is ATP-dependent Clp protease proteolytic subunit (203 aa).

S100 (nucleophile) is an active-site residue. H125 is a catalytic residue.

Belongs to the peptidase S14 family. In terms of assembly, fourteen ClpP subunits assemble into 2 heptameric rings which stack back to back to give a disk-like structure with a central cavity, resembling the structure of eukaryotic proteasomes.

It localises to the cytoplasm. It carries out the reaction Hydrolysis of proteins to small peptides in the presence of ATP and magnesium. alpha-casein is the usual test substrate. In the absence of ATP, only oligopeptides shorter than five residues are hydrolyzed (such as succinyl-Leu-Tyr-|-NHMec, and Leu-Tyr-Leu-|-Tyr-Trp, in which cleavage of the -Tyr-|-Leu- and -Tyr-|-Trp bonds also occurs).. Functionally, cleaves peptides in various proteins in a process that requires ATP hydrolysis. Has a chymotrypsin-like activity. Plays a major role in the degradation of misfolded proteins. The chain is ATP-dependent Clp protease proteolytic subunit from Anaeromyxobacter dehalogenans (strain 2CP-1 / ATCC BAA-258).